The sequence spans 254 residues: 30 kDa major early protein (254 aa).

The polypeptide is 30 kDa major early protein (Human cytomegalovirus (strain Eisenhardt) (HHV-5)).